Consider the following 479-residue polypeptide: Ribosomal RNA small subunit methyltransferase F (479 aa).

Residues 125-131 (AAAPGSK), Glu149, Asp176, and Asp194 each bind S-adenosyl-L-methionine. Cys247 (nucleophile) is an active-site residue.

The protein belongs to the class I-like SAM-binding methyltransferase superfamily. RsmB/NOP family.

The protein resides in the cytoplasm. It carries out the reaction cytidine(1407) in 16S rRNA + S-adenosyl-L-methionine = 5-methylcytidine(1407) in 16S rRNA + S-adenosyl-L-homocysteine + H(+). In terms of biological role, specifically methylates the cytosine at position 1407 (m5C1407) of 16S rRNA. In Escherichia coli O81 (strain ED1a), this protein is Ribosomal RNA small subunit methyltransferase F.